The following is an 83-amino-acid chain: Cytochrome b559 subunit alpha (83 aa).

The helical transmembrane segment at 21–35 (VIHSITIPSLFIAGW) threads the bilayer. Position 23 (H23) interacts with heme.

It belongs to the PsbE/PsbF family. In terms of assembly, heterodimer of an alpha subunit and a beta subunit. PSII is composed of 1 copy each of membrane proteins PsbA, PsbB, PsbC, PsbD, PsbE, PsbF, PsbH, PsbI, PsbJ, PsbK, PsbL, PsbM, PsbT, PsbX, PsbY, PsbZ, Psb30/Ycf12, at least 3 peripheral proteins of the oxygen-evolving complex and a large number of cofactors. It forms dimeric complexes. Heme b is required as a cofactor.

Its subcellular location is the plastid. The protein resides in the chloroplast thylakoid membrane. Its function is as follows. This b-type cytochrome is tightly associated with the reaction center of photosystem II (PSII). PSII is a light-driven water:plastoquinone oxidoreductase that uses light energy to abstract electrons from H(2)O, generating O(2) and a proton gradient subsequently used for ATP formation. It consists of a core antenna complex that captures photons, and an electron transfer chain that converts photonic excitation into a charge separation. This chain is Cytochrome b559 subunit alpha, found in Phalaenopsis aphrodite subsp. formosana (Moth orchid).